We begin with the raw amino-acid sequence, 106 residues long: uncharacterized protein (106 aa).

A signal peptide spans 1 to 22 (MKKHPNLLLGFSVYLSAGTKLT). Residues 23-46 (IPPEAEQHTAPSDNNKRKRAKCDD) are disordered.

This is an uncharacterized protein from Arabidopsis thaliana (Mouse-ear cress).